A 274-amino-acid chain; its full sequence is Undecaprenyl-diphosphatase (274 aa).

A run of 8 helical transmembrane segments spans residues 1–21 (MDWFYAIIYGIVEGITEFLPI), 48–68 (VVIQGGAILAVLAYYWRDFAG), 84–104 (LGVIVGVIPAVVLGVLFGDVI), 108–128 (LFRPSVVAWALIVGGVLMWVI), 143–163 (IGLGRAFLIGAAQCLALLWPG), 187–207 (FSFYLGIPTLGGAALLDFIKS), 214–234 (IGLLNVFLGAAVSFVVAYLAI), and 254–274 (VIFGLLILLLVASGRLANGGL).

It belongs to the UppP family.

Its subcellular location is the cell membrane. It carries out the reaction di-trans,octa-cis-undecaprenyl diphosphate + H2O = di-trans,octa-cis-undecaprenyl phosphate + phosphate + H(+). Catalyzes the dephosphorylation of undecaprenyl diphosphate (UPP). Confers resistance to bacitracin. This is Undecaprenyl-diphosphatase from Deinococcus geothermalis (strain DSM 11300 / CIP 105573 / AG-3a).